We begin with the raw amino-acid sequence, 405 residues long: S-adenosylmethionine synthase (405 aa).

141–146 (GQGSVD) contacts ATP.

Belongs to the AdoMet synthase 2 family. Mg(2+) serves as cofactor.

The catalysed reaction is L-methionine + ATP + H2O = S-adenosyl-L-methionine + phosphate + diphosphate. Its pathway is amino-acid biosynthesis; S-adenosyl-L-methionine biosynthesis; S-adenosyl-L-methionine from L-methionine: step 1/1. In terms of biological role, catalyzes the formation of S-adenosylmethionine from methionine and ATP. This Methanococcus maripaludis (strain C5 / ATCC BAA-1333) protein is S-adenosylmethionine synthase.